A 366-amino-acid chain; its full sequence is Sperm equatorial segment protein 1 (366 aa).

A signal peptide spans 1–18 (MKFLVLLVALLLWPSSLP). N-linked (GlcNAc...) asparagine glycosylation is present at N129. Residues 139 to 204 (PFIEKDEPEP…EDVPQLSGDN (66 aa)) form a disordered region. The segment covering 144–157 (DEPEPEPEPEPEPE) has biased composition (acidic residues). The segment covering 165-189 (APTQVPSVTEPSQDVTSLSGSTDLG) has biased composition (polar residues).

The protein belongs to the SPESP1 family. In terms of processing, glycosylated. In testis there are two predominant forms of 77- and 67-kDa and a form of 47-kDa, whereas in epididymal sperm from caput, corpus, and cauda there are two forms of 47- and 43-kDa. Testis forms contain complex carbohydrate residues. Epididymal sperm forms are N-glycosylated. Then undergoes significant glycosylation in the testis and that the majority of these glycoconjugates are removed by the time sperm reach the caput epididymis.

It is found in the cytoplasmic vesicle. The protein localises to the secretory vesicle. It localises to the acrosome. Involved in fertilization ability of sperm. The protein is Sperm equatorial segment protein 1 of Bos taurus (Bovine).